Reading from the N-terminus, the 84-residue chain is Acyl carrier protein (84 aa).

Residues 4–80 (SETFEKVKKI…EAVDYINNQV (77 aa)) form the Carrier domain. S40 carries the post-translational modification O-(pantetheine 4'-phosphoryl)serine.

It belongs to the acyl carrier protein (ACP) family. 4'-phosphopantetheine is transferred from CoA to a specific serine of apo-ACP by AcpS. This modification is essential for activity because fatty acids are bound in thioester linkage to the sulfhydryl of the prosthetic group.

Its subcellular location is the cytoplasm. It participates in lipid metabolism; fatty acid biosynthesis. Functionally, carrier of the growing fatty acid chain in fatty acid biosynthesis. The sequence is that of Acyl carrier protein from Nostoc sp. (strain PCC 7120 / SAG 25.82 / UTEX 2576).